A 306-amino-acid chain; its full sequence is Curved DNA-binding protein (306 aa).

Positions 5 to 69 constitute a J domain; that stretch reads DYYAIMGVKP…QRRAEYDQLW (65 aa).

It localises to the cytoplasm. The protein localises to the nucleoid. Functionally, DNA-binding protein that preferentially recognizes a curved DNA sequence. It is probably a functional analog of DnaJ; displays overlapping activities with DnaJ, but functions under different conditions, probably acting as a molecular chaperone in an adaptive response to environmental stresses other than heat shock. Lacks autonomous chaperone activity; binds native substrates and targets them for recognition by DnaK. Its activity is inhibited by the binding of CbpM. This chain is Curved DNA-binding protein, found in Citrobacter koseri (strain ATCC BAA-895 / CDC 4225-83 / SGSC4696).